The primary structure comprises 616 residues: Chaperone protein HscA (616 aa).

Belongs to the heat shock protein 70 family.

Functionally, chaperone involved in the maturation of iron-sulfur cluster-containing proteins. Has a low intrinsic ATPase activity which is markedly stimulated by HscB. Involved in the maturation of IscU. This is Chaperone protein HscA from Klebsiella pneumoniae subsp. pneumoniae (strain ATCC 700721 / MGH 78578).